The primary structure comprises 729 residues: MEVEDSGGVVLTAYHSYARAQPPNAESRCAPRAAASHPLSRKSIPRCRRINRMLSNESLHPPAFSRSNSEASVDSASMEDFWREIESIKDSSMGGQEEPPPAEVTPVDEGELEAEWLQDVGLSTLISGDEEEDGKALLSTLTRTQAAAVQKRYHTYTQTMRKKDKQSIRDVRDIFGVSESPPRDTCGNHTNQLDGTKEERELPRVIKTSGSMPDDASLNSTTLSDASQDKEGSFAVPRSDSVAILETIPVLPVHSNGSPEPGQPVQNAISDDDFLEKNIPPEAEELSFEVSYSEMVTEALKRNKLKKSEIKKEDYVLTKFNVQKTRFGLTEAGDLSAEDMKKIRHLSLIELTAFFDAFGIQLKRNKTEKVKGRDNGIFGVPLTVLLDGDRKKDPGVKVPLVLQKFFEKVEESGLESEGIFRLSGCTAKVKQYREELDAKFNADKFKWDKMCHREAAVMLKAFFRELPTSLFPVEYIPAFISLMERGPHVKVQFQALHLMVMALPDANRDAAQALMTFFNKVIANESKNRMSLWNISTVMAPNLFFSRSKHSDYEELLLANTAAHIIRLMLKYQKILWKVPSFLITQVRRMNEATMLLKKQLPSVRKLLRRKTLERETASPKTSKVLQKSPSARRMSDVPEGVIRVHAPLLSKVSMAIQLNNQTKAKDILAKFQYENSHGSSECIKIQNQRLYEIGGNIGEHCLDPDAYILDVYRINPQAEWVIKPQQSS.

Disordered regions lie at residues 20–42 and 55–105; these read AQPP…LSRK and SNES…AEVT. A compositionally biased stretch (polar residues) spans 65–75; the sequence is SRSNSEASVDS. At serine 72 the chain carries Phosphoserine. The span at 80–89 shows a compositional bias: basic and acidic residues; sequence DFWREIESIK. Threonine 159 carries the phosphothreonine modification. The disordered stretch occupies residues 176-236; the sequence is GVSESPPRDT…SQDKEGSFAV (61 aa). Basic and acidic residues predominate over residues 195–204; that stretch reads GTKEERELPR. The segment covering 217-226 has biased composition (polar residues); it reads SLNSTTLSDA. A Rho-GAP domain is found at 380 to 577; that stretch reads VPLTVLLDGD…LMLKYQKILW (198 aa). Residues 612 to 631 form a disordered region; it reads TLERETASPKTSKVLQKSPS. Residues 619-630 are compositionally biased toward polar residues; that stretch reads SPKTSKVLQKSP.

As to expression, expressed in testis. Expressed at moderate level in kidney and ovary, and weakly expressed in spleen and skeletal muscle.

Functionally, GTPase activator for the Rho-type GTPases by converting them to an inactive GDP-bound state. This is Rho GTPase-activating protein 28 (ARHGAP28) from Homo sapiens (Human).